A 286-amino-acid polypeptide reads, in one-letter code: Soluble epoxide hydrolase (286 aa).

The AB hydrolase-1 domain maps to 26–123; that stretch reads YPLVLLHGWP…DLVERLFILD (98 aa). The active-site Nucleophile is the Asp-99. Tyr-209 (proton donor) is an active-site residue. His-264 serves as the catalytic Proton acceptor.

This sequence belongs to the AB hydrolase superfamily. Epoxide hydrolase family. Homotetramer.

The protein localises to the cytoplasm. The protein resides in the cell membrane. The enzyme catalyses an epoxide + H2O = an ethanediol. Involved in catabolic degradation of epoxides. Shows highest activity towards C6 and C7 carbocyclic epoxides. Also active towards linear 1,2-epoxyalkanes. In Corynebacterium sp. (strain C12), this protein is Soluble epoxide hydrolase.